Consider the following 119-residue polypeptide: Large ribosomal subunit protein uL18 (119 aa).

It belongs to the universal ribosomal protein uL18 family. In terms of assembly, part of the 50S ribosomal subunit; part of the 5S rRNA/L5/L18/L25 subcomplex. Contacts the 5S and 23S rRNAs.

In terms of biological role, this is one of the proteins that bind and probably mediate the attachment of the 5S RNA into the large ribosomal subunit, where it forms part of the central protuberance. In Micrococcus luteus (Micrococcus lysodeikticus), this protein is Large ribosomal subunit protein uL18.